Consider the following 152-residue polypeptide: uncharacterized protein (152 aa).

The N-terminal stretch at 1 to 16 (MRKLLISLALAIPVFA) is a signal peptide. The 116-residue stretch at 20–135 (NLLQKGYEVY…AVAYWLYHNY (116 aa)) folds into the Cytochrome c domain. 3 residues coordinate heme c: C33, C36, and H37.

This is an uncharacterized protein from Aquifex aeolicus (strain VF5).